We begin with the raw amino-acid sequence, 206 residues long: Small ribosomal subunit protein uS4B (206 aa).

The S4 RNA-binding domain occupies 96-156; the sequence is GRLDNVVYRM…EKAKKQSRIG (61 aa).

Belongs to the universal ribosomal protein uS4 family. Part of the 30S ribosomal subunit. Contacts protein S5. The interaction surface between S4 and S5 is involved in control of translational fidelity.

One of the primary rRNA binding proteins, it binds directly to 16S rRNA where it nucleates assembly of the body of the 30S subunit. Its function is as follows. With S5 and S12 plays an important role in translational accuracy. The protein is Small ribosomal subunit protein uS4B of Psychromonas ingrahamii (strain DSM 17664 / CCUG 51855 / 37).